Consider the following 359-residue polypeptide: Holliday junction branch migration complex subunit RuvB (359 aa).

A disordered region spans residues 1–22 (MAIVSSNAEPSKGAPRPKPSRV). A large ATPase domain (RuvB-L) region spans residues 13–204 (GAPRPKPSRV…FGLIQRLEFY (192 aa)). The ATP site is built by Leu-43, Arg-44, Gly-85, Lys-88, Thr-89, Thr-90, Arg-194, Tyr-204, and Arg-241. Thr-89 provides a ligand contact to Mg(2+). The small ATPAse domain (RuvB-S) stretch occupies residues 205-276 (GQEDLQAIVM…LVDEALTLHR (72 aa)). A head domain (RuvB-H) region spans residues 279-359 (GKGLDASDRR…GWPADEGDAA (81 aa)). 2 residues coordinate DNA: Arg-334 and Arg-339.

It belongs to the RuvB family. As to quaternary structure, homohexamer. Forms an RuvA(8)-RuvB(12)-Holliday junction (HJ) complex. HJ DNA is sandwiched between 2 RuvA tetramers; dsDNA enters through RuvA and exits via RuvB. An RuvB hexamer assembles on each DNA strand where it exits the tetramer. Each RuvB hexamer is contacted by two RuvA subunits (via domain III) on 2 adjacent RuvB subunits; this complex drives branch migration. In the full resolvosome a probable DNA-RuvA(4)-RuvB(12)-RuvC(2) complex forms which resolves the HJ.

The protein localises to the cytoplasm. It catalyses the reaction ATP + H2O = ADP + phosphate + H(+). In terms of biological role, the RuvA-RuvB-RuvC complex processes Holliday junction (HJ) DNA during genetic recombination and DNA repair, while the RuvA-RuvB complex plays an important role in the rescue of blocked DNA replication forks via replication fork reversal (RFR). RuvA specifically binds to HJ cruciform DNA, conferring on it an open structure. The RuvB hexamer acts as an ATP-dependent pump, pulling dsDNA into and through the RuvAB complex. RuvB forms 2 homohexamers on either side of HJ DNA bound by 1 or 2 RuvA tetramers; 4 subunits per hexamer contact DNA at a time. Coordinated motions by a converter formed by DNA-disengaged RuvB subunits stimulates ATP hydrolysis and nucleotide exchange. Immobilization of the converter enables RuvB to convert the ATP-contained energy into a lever motion, pulling 2 nucleotides of DNA out of the RuvA tetramer per ATP hydrolyzed, thus driving DNA branch migration. The RuvB motors rotate together with the DNA substrate, which together with the progressing nucleotide cycle form the mechanistic basis for DNA recombination by continuous HJ branch migration. Branch migration allows RuvC to scan DNA until it finds its consensus sequence, where it cleaves and resolves cruciform DNA. In Synechococcus sp. (strain CC9311), this protein is Holliday junction branch migration complex subunit RuvB.